The chain runs to 194 residues: Small ribosomal subunit protein uS7 (194 aa).

This sequence belongs to the universal ribosomal protein uS7 family. Part of the 30S ribosomal subunit.

Its function is as follows. One of the primary rRNA binding proteins, it binds directly to 16S rRNA where it nucleates assembly of the head domain of the 30S subunit. Is located at the subunit interface close to the decoding center. The protein is Small ribosomal subunit protein uS7 of Archaeoglobus fulgidus (strain ATCC 49558 / DSM 4304 / JCM 9628 / NBRC 100126 / VC-16).